We begin with the raw amino-acid sequence, 1193 residues long: Dynamin-like protein A (1193 aa).

The D1, associates with and fuses membranes, tethers lipsomes stretch occupies residues 1–609 (MTDQNRKELL…AFRERVKRLE (609 aa)). The tract at residues 50-57 (GHYSAGKS) is G1 motif D1. Positions 76 to 78 (TSA) are G2 motif D1. The interval 141-144 (DTPG) is G3 motif D1. The interval 199-202 (NQID) is G4 motif D1. The interval 561–1193 (MPKSEIKMEQ…WKNSDNTIKM (633 aa)) is D2, does not associate with membranes. Residues 619 to 626 (GGFSSGKS) form a G1 motif D2 region. Positions 645 to 647 (TTA) are G2 motif D2. A G3 motif D2 region spans residues 774 to 777 (DTPG). A G4 motif D2 region spans residues 837–840 (NAAD).

This sequence belongs to the TRAFAC class dynamin-like GTPase superfamily. Dynamin/Fzo/YdjA family. In terms of assembly, homodimer in solution. Both D1 and D2 domains interact with YwpG, YneK interacts only with D1 while RNase Y (rny) only interacts with whole protein. Probably oligomerizes at damaged membrane sites. It depends on Mg(2+) as a cofactor.

The protein resides in the cell membrane. The enzyme catalyses GTP + H2O = GDP + phosphate + H(+). Its function is as follows. Mediates lipid mixing of vesicles and full mixing of their contents in the absence and presence of GTP. Tethers and mixes small vesicles better than larger ones, indicating a curvature preference. GTP slows down DynA-mediated lipid fusion, perhaps controlling its activity. Prefers phospholipid composition close to the B.subtilis membrane; requires phosphatidylglycerol for fusion has no activity on pure phosphatidylethanolamine vesicles. Regulates membrane lipid diffusion. Required to prevent membrane damage when exposed to low levels of membrane-damaging antibiotics or to bacteriophage. Probably surveys the cell membrane for stress; localizes to sites of membrane damage (treatment with nisin) and forms foci in cells treated with pore-forming compounds (CCCP). May assist membrane repair, possibly by membrane tethering and fusion. Probably functions both in early and late cell division, affects the proper formation of the FtsZ ring. Plays a non-redundant role with flottilin (floT) in membrane dynamics and cell shape. Probably able to bend membranes. Tethers liposomes and mediates their fusion; this does not require GTPase activity or the presence of GTP. Both GTPase domains (dynamin-type G) are required for GTPase activity. Functionally, has intrinsic affinity for membranes and membrane distortion capability; causes tubulation and membrane distortion when expressed in a Drosophila cell line. The sequence is that of Dynamin-like protein A from Bacillus subtilis (strain 168).